The primary structure comprises 202 residues: MKNRLLILSLLVSVPAFAWQPQTGDIIFQISRSSQSKAIQLATHTDYSHTGMLVIRNKKPYVFEAVGPVKYTPLKQWIAHGEKGKYVVRRVEGGLSVEQQQKLAQTAKRYLGKPYDFSFSWSDDRQYCSEVVWKVYQNALGMRVGEQQKLKEFDLSSPQVQAKLKERYGKNIPLEETVVSPQAVFDAPQLTTVAKEWPLFSW.

Residues 1–18 (MKNRLLILSLLVSVPAFA) form the signal peptide.

It to E.coli YebB.

This is an uncharacterized protein from Escherichia coli (strain K12).